Here is a 333-residue protein sequence, read N- to C-terminus: T-cell surface glycoprotein CD1b1 (333 aa).

The signal sequence occupies residues 1 to 17 (MLLVALALLAFLFPAGD). The Extracellular segment spans residues 18–302 (TQNALQWPTS…LYWGHSISIG (285 aa)). 3 N-linked (GlcNAc...) asparagine glycosylation sites follow: asparagine 38, asparagine 75, and asparagine 146. 3 cysteine pairs are disulfide-bonded: cysteine 120–cysteine 184, cysteine 149–cysteine 163, and cysteine 224–cysteine 279. One can recognise an Ig-like domain in the interval 197 to 295 (PDIQKQVKPD…LEGQDIILYW (99 aa)). The helical transmembrane segment at 303 to 323 (WIILAVLVPCLIVLVLFVLWF) threads the bilayer. At 324–333 (YRRWSYEDIL) the chain is on the cytoplasmic side. Residues 329 to 332 (YEDI) carry the Internalization signal motif.

In terms of assembly, heterodimer with B2M (beta-2-microglobulin). Interacts with saposin C.

The protein resides in the cell membrane. It localises to the endosome membrane. Its subcellular location is the lysosome membrane. Functionally, antigen-presenting protein that binds self and non-self lipid and glycolipid antigens and presents them to T-cell receptors on natural killer T-cells. In Cavia porcellus (Guinea pig), this protein is T-cell surface glycoprotein CD1b1 (CD1B1).